The following is a 165-amino-acid chain: MKESSLKLAKKVTVSEITNKISSAKAIAFAEYRGLTVAQLKEMRVEAKKVGVELKVYKNRLFKLATDKLGYDLSSFLVGANIFAFSNDDDMSAAKLLVKFAKKHKEFVVLKAGTFEGKVVDTQELKKVAALPSYEEALTILARSLMAPLQQLSLGLKLVSEQKSN.

This sequence belongs to the universal ribosomal protein uL10 family. As to quaternary structure, part of the ribosomal stalk of the 50S ribosomal subunit. The N-terminus interacts with L11 and the large rRNA to form the base of the stalk. The C-terminus forms an elongated spine to which L12 dimers bind in a sequential fashion forming a multimeric L10(L12)X complex.

Its function is as follows. Forms part of the ribosomal stalk, playing a central role in the interaction of the ribosome with GTP-bound translation factors. The polypeptide is Large ribosomal subunit protein uL10 (Mycoplasmopsis synoviae (strain 53) (Mycoplasma synoviae)).